Reading from the N-terminus, the 361-residue chain is Phospho-N-acetylmuramoyl-pentapeptide-transferase (361 aa).

The next 10 membrane-spanning stretches (helical) occupy residues 18–38 (VFNY…ILVL), 73–93 (TMGG…WGDL), 97–117 (FIWV…MDDY), 135–155 (LLQS…ATTG), 168–188 (VLPN…VGSS), 196–216 (GLDG…GVFA), 235–255 (GAGE…GFLW), 263–283 (VFMG…TAVV), 288–308 (LVYF…ILQV), and 338–358 (KVIV…LATL).

This sequence belongs to the glycosyltransferase 4 family. MraY subfamily. The cofactor is Mg(2+).

Its subcellular location is the cell inner membrane. The catalysed reaction is UDP-N-acetyl-alpha-D-muramoyl-L-alanyl-gamma-D-glutamyl-meso-2,6-diaminopimeloyl-D-alanyl-D-alanine + di-trans,octa-cis-undecaprenyl phosphate = di-trans,octa-cis-undecaprenyl diphospho-N-acetyl-alpha-D-muramoyl-L-alanyl-D-glutamyl-meso-2,6-diaminopimeloyl-D-alanyl-D-alanine + UMP. The protein operates within cell wall biogenesis; peptidoglycan biosynthesis. Functionally, catalyzes the initial step of the lipid cycle reactions in the biosynthesis of the cell wall peptidoglycan: transfers peptidoglycan precursor phospho-MurNAc-pentapeptide from UDP-MurNAc-pentapeptide onto the lipid carrier undecaprenyl phosphate, yielding undecaprenyl-pyrophosphoryl-MurNAc-pentapeptide, known as lipid I. The sequence is that of Phospho-N-acetylmuramoyl-pentapeptide-transferase from Coxiella burnetii (strain CbuK_Q154) (Coxiella burnetii (strain Q154)).